Here is a 189-residue protein sequence, read N- to C-terminus: MDYIITGLGNPGERYTFTRHNAGFLAIDYLAQFFNTKVDKIKFKGLVGSFEYAGKKVLLLKPMTYMNASGESIIEAVNFYKIKPEKLIVIYDDIAFDVGVVKMRKKGSDGGHNGIKSIIQCLGTEEFPRIRIGIGVPKYDMVKYVLSEFEDGEKEKIFRAIEKASNGIKILLESDIDRAMNYINGDVVV.

Residue Y15 participates in tRNA binding. H20 serves as the catalytic Proton acceptor. Positions 65, 67, and 113 each coordinate tRNA.

The protein belongs to the PTH family. Monomer.

It localises to the cytoplasm. It catalyses the reaction an N-acyl-L-alpha-aminoacyl-tRNA + H2O = an N-acyl-L-amino acid + a tRNA + H(+). Its function is as follows. Hydrolyzes ribosome-free peptidyl-tRNAs (with 1 or more amino acids incorporated), which drop off the ribosome during protein synthesis, or as a result of ribosome stalling. In terms of biological role, catalyzes the release of premature peptidyl moieties from peptidyl-tRNA molecules trapped in stalled 50S ribosomal subunits, and thus maintains levels of free tRNAs and 50S ribosomes. This is Peptidyl-tRNA hydrolase from Caldicellulosiruptor bescii (strain ATCC BAA-1888 / DSM 6725 / KCTC 15123 / Z-1320) (Anaerocellum thermophilum).